The following is a 464-amino-acid chain: ATP synthase subunit beta (464 aa).

153–160 (GGAGVGKT) contacts ATP.

It belongs to the ATPase alpha/beta chains family. As to quaternary structure, F-type ATPases have 2 components, CF(1) - the catalytic core - and CF(0) - the membrane proton channel. CF(1) has five subunits: alpha(3), beta(3), gamma(1), delta(1), epsilon(1). CF(0) has three main subunits: a(1), b(2) and c(9-12). The alpha and beta chains form an alternating ring which encloses part of the gamma chain. CF(1) is attached to CF(0) by a central stalk formed by the gamma and epsilon chains, while a peripheral stalk is formed by the delta and b chains.

It localises to the cell inner membrane. It catalyses the reaction ATP + H2O + 4 H(+)(in) = ADP + phosphate + 5 H(+)(out). Its function is as follows. Produces ATP from ADP in the presence of a proton gradient across the membrane. The catalytic sites are hosted primarily by the beta subunits. This is ATP synthase subunit beta from Burkholderia ambifaria (strain ATCC BAA-244 / DSM 16087 / CCUG 44356 / LMG 19182 / AMMD) (Burkholderia cepacia (strain AMMD)).